A 489-amino-acid polypeptide reads, in one-letter code: 5'-AMP-activated protein kinase subunit gamma-3 (489 aa).

Residues 1-113 form a disordered region; that stretch reads MEPGLEHALR…PAGVGTPPTG (113 aa). Residues 34–46 are compositionally biased toward low complexity; the sequence is SSSWPSPAVTSSS. Basic residues predominate over residues 50 to 62; the sequence is RGKRRAKALRWTR. CBS domains lie at 197–258, 280–340, and 355–415; these read MATS…RSPL, CFKP…LLPR, and TFRD…HLDM. ADP contacts are provided by residues arginine 225, 240 to 245, valine 285, 306 to 307, and lysine 325; these read MLTITD and HR. AMP is bound by residues arginine 225, 240 to 245, valine 285, histidine 306, 306 to 307, lysine 325, threonine 355, alanine 360, 381 to 382, 397 to 400, arginine 424, leucine 432, histidine 453, 453 to 454, and 469 to 472; these read MLTITD, HR, SA, SRFD, and SLSD. ATP-binding positions include arginine 225, 240-245, valine 285, 306-307, arginine 307, and lysine 325; these read MLTITD and HR. An AMPK pseudosubstrate motif is present at residues 293-314; sequence LFEAVYTLIKNRIHRLPVLDPV. ADP-binding positions include 397-400, arginine 424, leucine 432, and 453-454; these read SRFD and HR. Residues 397–400, arginine 424, leucine 432, and 453–454 contribute to the ATP site; these read SRFD and HR. Residues 427 to 486 form the CBS 4 domain; it reads CLEGVLSCQPHESLGEVIDRIAREQVHRLVLVDETQHLLGVVSLSDILQALVLSPAGIDA.

The protein belongs to the 5'-AMP-activated protein kinase gamma subunit family. As to quaternary structure, AMPK is a heterotrimer of an alpha catalytic subunit (PRKAA1 or PRKAA2), a beta (PRKAB1 or PRKAB2) and a gamma non-catalytic subunits (PRKAG1, PRKAG2 or PRKAG3). Interacts with FNIP1 and FNIP2. Phosphorylated by ULK1; leading to negatively regulate AMPK activity and suggesting the existence of a regulatory feedback loop between ULK1 and AMPK. Post-translationally, glycosylated; O-GlcNAcylated by OGT, promoting the AMP-activated protein kinase (AMPK) activity. Skeletal muscle, with weak expression in heart and pancreas.

In terms of biological role, AMP/ATP-binding subunit of AMP-activated protein kinase (AMPK), an energy sensor protein kinase that plays a key role in regulating cellular energy metabolism. In response to reduction of intracellular ATP levels, AMPK activates energy-producing pathways and inhibits energy-consuming processes: inhibits protein, carbohydrate and lipid biosynthesis, as well as cell growth and proliferation. AMPK acts via direct phosphorylation of metabolic enzymes, and by longer-term effects via phosphorylation of transcription regulators. AMPK also acts as a regulator of cellular polarity by remodeling the actin cytoskeleton; probably by indirectly activating myosin. The AMPK gamma3 subunit is a non-catalytic subunit with a regulatory role in muscle energy metabolism. It mediates binding to AMP, ADP and ATP, leading to AMPK activation or inhibition: AMP-binding results in allosteric activation of alpha catalytic subunit (PRKAA1 or PRKAA2) both by inducing phosphorylation and preventing dephosphorylation of catalytic subunits. ADP also stimulates phosphorylation, without stimulating already phosphorylated catalytic subunit. ATP promotes dephosphorylation of catalytic subunit, rendering the AMPK enzyme inactive. This is 5'-AMP-activated protein kinase subunit gamma-3 (PRKAG3) from Homo sapiens (Human).